A 177-amino-acid chain; its full sequence is Ribosome maturation factor RimM (177 aa).

The region spanning 98 to 177 (GEEFYWRELY…RIEVDWDPGF (80 aa)) is the PRC barrel domain.

The protein belongs to the RimM family. In terms of assembly, binds ribosomal protein uS19.

The protein localises to the cytoplasm. Its function is as follows. An accessory protein needed during the final step in the assembly of 30S ribosomal subunit, possibly for assembly of the head region. Essential for efficient processing of 16S rRNA. May be needed both before and after RbfA during the maturation of 16S rRNA. It has affinity for free ribosomal 30S subunits but not for 70S ribosomes. In Photobacterium profundum (strain SS9), this protein is Ribosome maturation factor RimM.